The following is a 264-amino-acid chain: tRNA pseudouridine synthase A (264 aa).

Asp51 functions as the Nucleophile in the catalytic mechanism. Tyr109 lines the substrate pocket.

Belongs to the tRNA pseudouridine synthase TruA family. As to quaternary structure, homodimer.

It catalyses the reaction uridine(38/39/40) in tRNA = pseudouridine(38/39/40) in tRNA. Its function is as follows. Formation of pseudouridine at positions 38, 39 and 40 in the anticodon stem and loop of transfer RNAs. In Vibrio campbellii (strain ATCC BAA-1116), this protein is tRNA pseudouridine synthase A.